Reading from the N-terminus, the 122-residue chain is Large ribosomal subunit protein uL22 (122 aa).

The interval 102-122 (VAEGKEMKSSKSHKKNQAEGK) is disordered.

Belongs to the universal ribosomal protein uL22 family. Part of the 50S ribosomal subunit.

This protein binds specifically to 23S rRNA; its binding is stimulated by other ribosomal proteins, e.g. L4, L17, and L20. It is important during the early stages of 50S assembly. It makes multiple contacts with different domains of the 23S rRNA in the assembled 50S subunit and ribosome. In terms of biological role, the globular domain of the protein is located near the polypeptide exit tunnel on the outside of the subunit, while an extended beta-hairpin is found that lines the wall of the exit tunnel in the center of the 70S ribosome. The polypeptide is Large ribosomal subunit protein uL22 (Helicobacter pylori (strain ATCC 700392 / 26695) (Campylobacter pylori)).